The primary structure comprises 472 residues: Trigger factor (472 aa).

A PPIase FKBP-type domain is found at 174-261 (GDIALVSFKG…LEDLKIKELP (88 aa)). A disordered region spans residues 438-472 (EKTPEKARDQIKEKSSKKKTTKTNKEKKSSKTPKS). Positions 439–451 (KTPEKARDQIKEK) are enriched in basic and acidic residues.

The protein belongs to the FKBP-type PPIase family. Tig subfamily.

It is found in the cytoplasm. The enzyme catalyses [protein]-peptidylproline (omega=180) = [protein]-peptidylproline (omega=0). Involved in protein export. Acts as a chaperone by maintaining the newly synthesized protein in an open conformation. Functions as a peptidyl-prolyl cis-trans isomerase. The sequence is that of Trigger factor from Prochlorococcus marinus (strain NATL2A).